The chain runs to 348 residues: Lipopolysaccharide heptosyltransferase 2 (348 aa).

This sequence belongs to the glycosyltransferase 9 family.

The enzyme catalyses an L-alpha-D-Hep-(1-&gt;5)-[alpha-Kdo-(2-&gt;4)]-alpha-Kdo-(2-&gt;6)-lipid A + ADP-L-glycero-beta-D-manno-heptose = an L-alpha-D-Hep-(1-&gt;3)-L-alpha-D-Hep-(1-&gt;5)-[alpha-Kdo-(2-&gt;4)]-alpha-Kdo-(2-&gt;6)-lipid A + ADP + H(+). The catalysed reaction is L-alpha-D-Hep-(1-&gt;5)-[alpha-Kdo-(2-&gt;4)]-alpha-Kdo-(2-&gt;6)-lipid A (E. coli) + ADP-L-glycero-beta-D-manno-heptose = L-alpha-D-Hep-(1-&gt;3)-L-alpha-D-Hep-(1-&gt;5)-[alpha-Kdo-(2-&gt;4)]-alpha-Kdo-(2-&gt;6)-lipid A (E. coli) + ADP + H(+). The protein operates within bacterial outer membrane biogenesis; LPS core biosynthesis. Functionally, glycosyltransferase involved in the biosynthesis of the core oligosaccharide region of lipopolysaccharide (LPS). Catalyzes the addition of the second heptose unit to the heptosyl-Kdo2-lipid A module. The analog ADP-mannose can serve as an alternative donor in place of ADP-L-glycero-D-manno-heptose, but with lower efficiency. This Escherichia coli (strain K12) protein is Lipopolysaccharide heptosyltransferase 2.